The primary structure comprises 524 residues: 12S seed storage protein CRC (524 aa).

A signal peptide spans M1–A23. Cysteines 37 and 70 form a disulfide. 2 consecutive Cupin type-1 domains span residues L42 to Q289 and E346 to R495. S53 is modified (phosphoserine). A Phosphotyrosine modification is found at Y78. S97 carries the phosphoserine modification. C113 and C340 are disulfide-bonded. Position 116 is a phosphothreonine (T116). Residues D119 to R190 are disordered. Over residues Q124–G188 the composition is skewed to low complexity. Phosphoserine is present on residues S259 and S366. T459 carries the post-translational modification Phosphothreonine. S484 carries the post-translational modification Phosphoserine. At T501 the chain carries Phosphothreonine.

This sequence belongs to the 11S seed storage protein (globulins) family. In terms of assembly, hexamer; each subunit is composed of an acidic and a basic chain derived from a single precursor and linked by a disulfide bond. Post-translationally, proteolytically processed during seed maturation at a conserved Asn-Gly peptide bond by an asparaginyl endopeptidase to produce two mature polypeptides referred to as alpha and beta subunits that are joined together by a disulfide bond. Phosphorylated in seeds on some Tyr residues in response to abscisic acid (ABA). Accumulates in seeds 8 days after anthesis.

The protein resides in the protein storage vacuole. Its function is as follows. Seed storage protein. The polypeptide is 12S seed storage protein CRC (CRC) (Arabidopsis thaliana (Mouse-ear cress)).